A 357-amino-acid chain; its full sequence is tRNA-specific 2-thiouridylase MnmA (357 aa).

Residues 6 to 13 (AMSGGVDS) and Leu32 each bind ATP. Residue Cys101 is the Nucleophile of the active site. Cys101 and Cys193 are disulfide-bonded. Residue Gly125 participates in ATP binding. Residues 143 to 145 (KDQ) are interaction with tRNA. The active-site Cysteine persulfide intermediate is the Cys193.

The protein belongs to the MnmA/TRMU family.

Its subcellular location is the cytoplasm. The catalysed reaction is S-sulfanyl-L-cysteinyl-[protein] + uridine(34) in tRNA + AH2 + ATP = 2-thiouridine(34) in tRNA + L-cysteinyl-[protein] + A + AMP + diphosphate + H(+). Functionally, catalyzes the 2-thiolation of uridine at the wobble position (U34) of tRNA, leading to the formation of s(2)U34. In Mycolicibacterium vanbaalenii (strain DSM 7251 / JCM 13017 / BCRC 16820 / KCTC 9966 / NRRL B-24157 / PYR-1) (Mycobacterium vanbaalenii), this protein is tRNA-specific 2-thiouridylase MnmA.